A 212-amino-acid polypeptide reads, in one-letter code: Glutathione S-transferase P 1 (212 aa).

Residues 2-83 (PGYVLTYFPV…YLGNKHGLTG (82 aa)) enclose the GST N-terminal domain. Residues Tyr-8, Arg-14, Trp-39, Lys-47, 54–55 (QL), and 67–68 (QS) each bind glutathione. The GST C-terminal domain maps to 85–206 (NDEERGHIDM…KSDARNKRPI (122 aa)).

The protein belongs to the GST superfamily. Pi family. In terms of assembly, homodimer. As to expression, expressed only in embryos. Not expressed in liver, lung, heart, kidney and ovary.

The protein resides in the cytoplasm. The protein localises to the mitochondrion. It is found in the nucleus. It carries out the reaction RX + glutathione = an S-substituted glutathione + a halide anion + H(+). Functionally, conjugation of reduced glutathione to a wide number of exogenous and endogenous hydrophobic electrophiles. Highly active towards 1-chloro-2,4-dinitrobenzene and organic isothiocyanates, but shows no detectable activity towards 1,2-dichloro-4-nitrobenzene, p-nitrobenzylchloride, trans-4-phenyl-3-buten-2-one (tPBO) and ethacrynic acid. May be associated with cellular proliferation. This Xenopus laevis (African clawed frog) protein is Glutathione S-transferase P 1 (gstp1).